A 224-amino-acid chain; its full sequence is Ribose-5-phosphate isomerase A 2 (224 aa).

Substrate is bound by residues 27 to 30 (SGST), 83 to 86 (DGTD), and 96 to 99 (KGGG). The Proton acceptor role is filled by Glu-105. Position 123 (Lys-123) interacts with substrate.

It belongs to the ribose 5-phosphate isomerase family. As to quaternary structure, homodimer.

It catalyses the reaction aldehydo-D-ribose 5-phosphate = D-ribulose 5-phosphate. The protein operates within carbohydrate degradation; pentose phosphate pathway; D-ribose 5-phosphate from D-ribulose 5-phosphate (non-oxidative stage): step 1/1. In terms of biological role, catalyzes the reversible conversion of ribose-5-phosphate to ribulose 5-phosphate. The polypeptide is Ribose-5-phosphate isomerase A 2 (Oceanobacillus iheyensis (strain DSM 14371 / CIP 107618 / JCM 11309 / KCTC 3954 / HTE831)).